The primary structure comprises 80 residues: MPKKNEAPASFETALGELEQIVNRLESGDLPLEEALSEFERGVQLARQGQSQLQKAEQRVQILLADSEDSPTTPFTPDAE.

It belongs to the XseB family. Heterooligomer composed of large and small subunits.

The protein resides in the cytoplasm. The catalysed reaction is Exonucleolytic cleavage in either 5'- to 3'- or 3'- to 5'-direction to yield nucleoside 5'-phosphates.. Its function is as follows. Bidirectionally degrades single-stranded DNA into large acid-insoluble oligonucleotides, which are then degraded further into small acid-soluble oligonucleotides. The protein is Exodeoxyribonuclease 7 small subunit of Klebsiella pneumoniae (strain 342).